A 935-amino-acid polypeptide reads, in one-letter code: Progesterone receptor (935 aa).

The interval 1–49 (MTELKAKGXRAPHVAGSPSSPKVXSPLPCRQAAXPFPGSQTSDTLPEVS) is disordered. The segment at 1 to 164 (MTELKAKGXR…SATQRVLSRL (164 aa)) is AF3; mediates transcriptional activation. Residues 1 to 568 (MTELKAKGXR…YSFESLPQKI (568 aa)) form a modulating, Pro-Rich region. Residues 17–28 (SPSSPKVXSPLP) show a composition bias toward low complexity. Serine 20 bears the Phosphoserine mark. An LXXL motif 1 motif is present at residues 55–59 (LDGLL). The interval 61–255 (PRICQGQDPP…GAAAGGGAAA (195 aa)) is disordered. Serine 81 carries the phosphoserine modification. The LXXL motif 2 signature appears at 115–119 (LDTLW). 2 positions are modified to phosphoserine: serine 130 and serine 162. Residues 165 to 305 (MSRSGGKAGD…LATTVTDFIH (141 aa)) form a mediates transcriptional transrepression region. Positions 183 to 187 (KVLPR) match the Nuclear localization signal motif. Serine 190 is subject to Phosphoserine. The segment covering 191 to 203 (PSRQLLLPTTGSP) has biased composition (polar residues). Phosphoserine is present on serine 213. The segment covering 220-231 (EVEEEDGSESED) has biased composition (acidic residues). Residues 232–246 (SAGPLLKGKPRALGG) show a composition bias toward low complexity. Phosphoserine; by MAPK1 is present on serine 294. Residues 331–365 (GGAGAASAFAPPRSSPSASSTPVPGGDFPDCAYAP) form a disordered region. Low complexity predominate over residues 335 to 356 (AASAFAPPRSSPSASSTPVPGG). Phosphoserine; by MAPK is present on serine 345. A Glycyl lysine isopeptide (Lys-Gly) (interchain with G-Cter in SUMO); alternate cross-link involves residue lysine 388. Lysine 388 is covalently cross-linked (Glycyl lysine isopeptide (Lys-Gly) (interchain with G-Cter in ubiquitin); alternate). Position 400 is a phosphoserine; by CDK2 (serine 400). Positions 415–452 (PDFPLGPPPPLPPRAPPSRPGEAAVTAAPASASVSSAS) are disordered. The segment covering 418-433 (PLGPPPPLPPRAPPSR) has biased composition (pro residues). Positions 434–452 (PGEAAVTAAPASASVSSAS) are enriched in low complexity. Residues 456–548 (STLECILYKA…VYPPYLNYLR (93 aa)) are AF1; mediates transcriptional activation. Lysine 533 participates in a covalent cross-link: Glycyl lysine isopeptide (Lys-Gly) (interchain with G-Cter in SUMO). 2 NR C4-type zinc fingers span residues 569 to 589 (CLIC…CGSC) and 605 to 629 (CAGR…LRKC). Residues 569–641 (CLICGDEASG…AGMVLGGRKF (73 aa)) constitute a DNA-binding region (nuclear receptor). Serine 678 is subject to Phosphoserine. The region spanning 681–915 (QDIQLIPPLI…EFPEMMSEVI (235 aa)) is the NR LBD domain. The tract at residues 689 to 935 (LINLLLSIEP…MVKPLLFHKK (247 aa)) is AF2; mediates transcriptional activation.

Belongs to the nuclear hormone receptor family. Interacts with SMARD1 and UNC45A. Interacts with CUEDC2; the interaction promotes ubiquitination, decreases sumoylation, and represses transcriptional activity. Interacts with PIAS3; the interaction promotes sumoylation of PR in a hormone-dependent manner, inhibits DNA-binding, and alters nuclear export. Interacts with SP1; the interaction requires ligand-induced phosphorylation on Ser-345 by ERK1/2-MAPK. Interacts with PRMT2. Interacts with NCOA2 and NCOA1. Interacts with KLF9. Interacts with GTF2B. Post-translationally, phosphorylated on multiple serine sites. Several of these sites are hormone-dependent. Phosphorylation on Ser-294 is highly hormone-dependent and modulates ubiquitination and sumoylation on Lys-388. Phosphorylation on Ser-345 also requires induction by hormone. Basal phosphorylation on Ser-81, Ser-162, Ser-190 and Ser-400 is increased in response to progesterone and can be phosphorylated in vitro by the CDK2-A1 complex. Increased levels of phosphorylation on Ser-400 also in the presence of EGF, heregulin, IGF, PMA and FBS. Phosphorylation at this site by CDK2 is ligand-independent, and increases nuclear translocation and transcriptional activity. Phosphorylation at Ser-162 and Ser-294, but not at Ser-190, is impaired during the G(2)/M phase of the cell cycle. Phosphorylation on Ser-345 by ERK1/2 MAPK is required for interaction with SP1. In terms of processing, sumoylation is hormone-dependent and represses transcriptional activity. Sumoylation on all three sites is enhanced by PIAS3. Desumoylated by SENP1. Sumoylation on Lys-388, the main site of sumoylation, is repressed by ubiquitination on the same site, and modulated by phosphorylation at Ser-294. Ubiquitination is hormone-dependent and represses sumoylation on the same site. Promoted by MAPK-mediated phosphorylation on Ser-294. Post-translationally, palmitoylated by ZDHHC7 and ZDHHC21. Palmitoylation is required for plasma membrane targeting and for rapid intracellular signaling via ERK and AKT kinases and cAMP generation.

The protein resides in the nucleus. It localises to the cytoplasm. Functionally, the steroid hormones and their receptors are involved in the regulation of eukaryotic gene expression and affect cellular proliferation and differentiation in target tissues. Transcriptional activator of several progesteron-dependent promoters in a variety of cell types. Involved in activation of SRC-dependent MAPK signaling on hormone stimulation. The polypeptide is Progesterone receptor (PGR) (Ateles paniscus (Black spider monkey)).